We begin with the raw amino-acid sequence, 1479 residues long: ESX secretion system protein EccC (1479 aa).

Topologically, residues 1-235 (MSQLWVLYET…SQEGDGDPRG (235 aa)) are cytoplasmic. Residues 236–256 (LWLMVLPPVMMLLVIGAVALI) traverse the membrane as a helical segment. The Extracellular segment spans residues 257–259 (QPR). A helical transmembrane segment spans residues 260–280 (GVFIMISIAMFATTIVTSTAQ). The Cytoplasmic segment spans residues 281–1479 (YMREKKARQM…DQKIQIPKVE (1199 aa)). A coiled-coil region spans residues 291–321 (RKEKRRRIYTNYLEQKREELQALSEKQRNVL). 2 consecutive FtsK domains span residues 652–848 (NDVV…NDSK) and 984–1168 (QSDY…SEKF). ATP is bound at residue 672–679 (GTTGSGKS). Residue Glu-785 is part of the active site. Residues 1004–1009 (GYGKST), Asn-1036, Asp-1105, Ile-1197, Asp-1206, 1287–1291 (RKGKT), and Ile-1475 each bind ATP. Residues 1267–1444 (VRPVAINMRT…ILVTKKSEQS (178 aa)) form the FtsK 3 domain.

Whole protein oligomerizes in native gels. Part of the ESX / type VII secretion system (T7SS), which is composed of cytosolic and membrane components. The ESX membrane complex is composed of EccB, EccC and EccD.

The protein localises to the cell membrane. Its activity is regulated as follows. EsxB binding to the third FtsK domain causes multimerization; a subsequent unknown step relieves the allosteric inhibition of linker 2 on FtsK domain 1, activating the ATPase activity. Part of the ESX specialized secretion system, which exports proteins from the cell including EsxA (ESAT-6) and EsxB (CFP-10). Might be the translocase subunit. Probably only the first FtsK domain can hydrolyze ATP. This Geobacillus thermodenitrificans (strain NG80-2) protein is ESX secretion system protein EccC.